The sequence spans 841 residues: MFALVLAVVILPLWTTANKSYVTPTPATRSIGHMSALLREYSDRNMSLKLEAFYPTGFDEELIKSLHWGNDRKHVFLVIVKVNPTTHEGDVGLVIFPKYLLSPYHFKAEHRAPFPAGRFGFLSHPVTPDVSFFDSSFAPYLTTQHLVAFTTFPPNPLVWHLERAETAATAERPFGVSLLPARPTVPKNTILEHKAHFATWDALARHTFFSAEAIITNSTLRIHVPLFGSVWPIRYWATGSVLLTSDSGRVEVNIGVGFMSSLISLSSGPPIELIVVPHTVKLNAVTSDTTWFQLNPPGPDPGPSYRVYLLGRGLDMNFSKHATVDICAYPEESLDYRYHLSMAHTEALRMTTKADQHDINEESYYHIAARIATSIFALSEMGRTTEYFLLDEIVDVQYQLKFLNYILMRIGAGAHPNTISGTSDLIFADPSQLHDELSLLFGQVKPANVDYFISYDEARDQLKTAYALSRGQDHVNALSLARRVIMSIYKGLLVKQNLNATERQALFFASMILLNFREGLENSSRVLDGRTTLLLMTSMCTAAHATQAALNIQEGLAYLNPSKHMFTIPNVYSPCMGSLRTDLTEEIHVMNLLSAIPTRPGLNEVLHTQLDESEIFDAAFKTMMIFTTWTAKDLHILHTHVPEVFTCQDAAARNGEYVLILPAVQGHSYVITRNKPQRGLVYSLADVDVYNPISVVYLSRDTCVSEHGVIETVALPHPDNLKECLYCGSVFLRYLTTGAIMDIIIIDSKDTERQLAAMGNSTIPPFNPDMHGDDSKAVLLFPNGTVVTLLGFERRQAIRMSGQYLGASLGGAFLAVVGFGIIGWMLCGNSRLREYNKIPLT.

A signal peptide spans 1 to 17; it reads MFALVLAVVILPLWTTA. Asn-18, Asn-45, and Asn-217 each carry an N-linked (GlcNAc...) asparagine; by host glycan. The Virion surface segment spans residues 18–802; it reads NKSYVTPTPA…ERRQAIRMSG (785 aa). The interval 246–309 is interaction with gL; that stretch reads DSGRVEVNIG…DPGPSYRVYL (64 aa). Asn-317, Asn-499, Asn-522, Asn-760, and Asn-783 each carry an N-linked (GlcNAc...) asparagine; by host glycan. The chain crosses the membrane as a helical span at residues 803 to 823; sequence QYLGASLGGAFLAVVGFGIIG. Over 824-841 the chain is Intravirion; that stretch reads WMLCGNSRLREYNKIPLT.

Belongs to the herpesviridae glycoprotein H family. Interacts with glycoprotein L (gL); this interaction is necessary for the correct processing and cell surface expression of gH. The heterodimer gH/gL seems to interact with gB trimers during fusion. In terms of processing, N-glycosylated, O-glycosylated, and sialylated.

The protein resides in the virion membrane. It is found in the host cell membrane. The protein localises to the host endosome membrane. Functionally, the heterodimer glycoprotein H-glycoprotein L is required for the fusion of viral and plasma membranes leading to virus entry into the host cell. Following initial binding to host receptor, membrane fusion is mediated by the fusion machinery composed of gB and the heterodimer gH/gL. May also be involved in the fusion between the virion envelope and the outer nuclear membrane during virion morphogenesis. In Varicella-zoster virus (strain Dumas) (HHV-3), this protein is Envelope glycoprotein H.